Reading from the N-terminus, the 550-residue chain is Medium/long-chain-fatty-acid--CoA/3-oxocholest-4-en-26-oate--CoA ligase (550 aa).

ATP contacts are provided by residues 178–186 (TGGTTGFPK), D419, R434, and K525. The tract at residues 525 to 550 (KPDYRWAKEQTEARPADDVHAAHVSA) is disordered.

It belongs to the ATP-dependent AMP-binding enzyme family.

The catalysed reaction is a medium-chain fatty acid + ATP + CoA = a medium-chain fatty acyl-CoA + AMP + diphosphate. The enzyme catalyses a long-chain fatty acid + ATP + CoA = a long-chain fatty acyl-CoA + AMP + diphosphate. It carries out the reaction (25S)-3-oxocholest-4-en-26-oate + ATP + CoA = (25S)-3-oxocholest-4-en-26-oyl-CoA + AMP + diphosphate. It functions in the pathway lipid metabolism; fatty acid biosynthesis. The protein operates within steroid metabolism; cholesterol metabolism. Its function is as follows. Catalyzes the activation of medium/long-chain fatty acids as acyl-coenzyme A (acyl-CoA), which are then transferred to the multifunctional polyketide synthase (PKS) type III for further chain extension. Also involved in the degradation of cholesterol via the degradation of the side chains of C-24 branched-chain sterols. Catalyzes the ATP-dependent CoA thioesterification of the sterol 3-oxocholest-4-en-26-oate to yield 3-oxocholest-4-en-26-oyl-CoA. This is Medium/long-chain-fatty-acid--CoA/3-oxocholest-4-en-26-oate--CoA ligase from Mycobacterium marinum (strain ATCC BAA-535 / M).